Here is a 130-residue protein sequence, read N- to C-terminus: Glycine cleavage system H protein (130 aa).

The Lipoyl-binding domain maps to 24-106; it reads IYSVGITEHA…YTDGWLFRIK (83 aa). N6-lipoyllysine is present on Lys65.

The protein belongs to the GcvH family. As to quaternary structure, the glycine cleavage system is composed of four proteins: P, T, L and H. (R)-lipoate serves as cofactor.

In terms of biological role, the glycine cleavage system catalyzes the degradation of glycine. The H protein shuttles the methylamine group of glycine from the P protein to the T protein. This is Glycine cleavage system H protein from Pectobacterium atrosepticum (strain SCRI 1043 / ATCC BAA-672) (Erwinia carotovora subsp. atroseptica).